The following is a 464-amino-acid chain: Argininosuccinate lyase (464 aa).

Belongs to the lyase 1 family. Argininosuccinate lyase subfamily.

It localises to the cytoplasm. It catalyses the reaction 2-(N(omega)-L-arginino)succinate = fumarate + L-arginine. It participates in amino-acid biosynthesis; L-arginine biosynthesis; L-arginine from L-ornithine and carbamoyl phosphate: step 3/3. The protein is Argininosuccinate lyase of Pseudomonas putida (strain GB-1).